The primary structure comprises 159 residues: Transcription elongation factor GreA (159 aa).

Residues 44 to 75 are a coiled coil; the sequence is SENAEYDAAREQQSQTEARIADLESKLSSATI.

Belongs to the GreA/GreB family.

Necessary for efficient RNA polymerase transcription elongation past template-encoded arresting sites. The arresting sites in DNA have the property of trapping a certain fraction of elongating RNA polymerases that pass through, resulting in locked ternary complexes. Cleavage of the nascent transcript by cleavage factors such as GreA or GreB allows the resumption of elongation from the new 3'terminus. GreA releases sequences of 2 to 3 nucleotides. The sequence is that of Transcription elongation factor GreA from Chlorobium phaeovibrioides (strain DSM 265 / 1930) (Prosthecochloris vibrioformis (strain DSM 265)).